Consider the following 509-residue polypeptide: Ribonuclease Y (509 aa).

A helical membrane pass occupies residues 5–25; that stretch reads IIILLSVFCGIFFICFIICSS. In terms of domain architecture, KH spans 199 to 259; sequence TTNIVKLPSD…IRREIATRTL (61 aa). Residues 325-418 form the HD domain; it reads VLAHSIEVAK…VAIADSISAS (94 aa).

Belongs to the RNase Y family.

It is found in the cell membrane. Functionally, endoribonuclease that initiates mRNA decay. This chain is Ribonuclease Y, found in Mycoplasma capricolum subsp. capricolum (strain California kid / ATCC 27343 / NCTC 10154).